Reading from the N-terminus, the 462-residue chain is Chromosomal replication initiator protein DnaA (462 aa).

Residues 1–84 are domain I, interacts with DnaA modulators; it reads MAVSLWQQCI…RFDIGSRPSA (84 aa). The segment at 84 to 125 is domain II; sequence ARTVQPAPAAPRPTTGHTQTKARVGTAFNIQAEPMANANHRS. The segment at 126–342 is domain III, AAA+ region; the sequence is NINPTYQFDN…GALNRVIANA (217 aa). ATP is bound by residues G170, G172, K173, and T174. Positions 343 to 462 are domain IV, binds dsDNA; sequence NFTGRPITID…YANLIRTLSS (120 aa).

Belongs to the DnaA family. As to quaternary structure, oligomerizes as a right-handed, spiral filament on DNA at oriC.

It is found in the cytoplasm. Functionally, plays an essential role in the initiation and regulation of chromosomal replication. ATP-DnaA binds to the origin of replication (oriC) to initiate formation of the DNA replication initiation complex once per cell cycle. Binds the DnaA box (a 9 base pair repeat at the origin) and separates the double-stranded (ds)DNA. Forms a right-handed helical filament on oriC DNA; dsDNA binds to the exterior of the filament while single-stranded (ss)DNA is stabiized in the filament's interior. The ATP-DnaA-oriC complex binds and stabilizes one strand of the AT-rich DNA unwinding element (DUE), permitting loading of DNA polymerase. After initiation quickly degrades to an ADP-DnaA complex that is not apt for DNA replication. Binds acidic phospholipids. The polypeptide is Chromosomal replication initiator protein DnaA (Shewanella denitrificans (strain OS217 / ATCC BAA-1090 / DSM 15013)).